The primary structure comprises 518 residues: GTPase MTG2, mitochondrial (518 aa).

Residues 1-23 (MSIAWSSVFKRELRLERFLPRVY) constitute a mitochondrion transit peptide. One can recognise an Obg domain in the interval 89 to 339 (GNFVDVRIVK…QHFLFELKSI (251 aa)). Residues 340–512 (ADLGLIGLPN…LKKKMFKCAR (173 aa)) form the OBG-type G domain. GTP contacts are provided by residues 346–353 (GLPNAGKS), 394–398 (DIPGI), and 460–463 (NKVD).

This sequence belongs to the TRAFAC class OBG-HflX-like GTPase superfamily. OBG GTPase family. As to quaternary structure, interacts with the mitochondrial 54S large ribosomal subunit.

The protein localises to the mitochondrion inner membrane. Required for mitochondrial protein synthesis. May be involved in mitochondrial ribosome biogenesis. The sequence is that of GTPase MTG2, mitochondrial (MTG2) from Saccharomyces cerevisiae (strain ATCC 204508 / S288c) (Baker's yeast).